Here is a 646-residue protein sequence, read N- to C-terminus: WW domain-containing adapter protein with coiled-coil (646 aa).

The tract at residues methionine 1–histidine 138 is disordered. The segment covering glutamine 23 to serine 37 has biased composition (polar residues). Residues serine 38–alanine 50 are compositionally biased toward basic and acidic residues. A Phosphoserine modification is found at serine 53. Residues arginine 61–histidine 75 are compositionally biased toward polar residues. Residues asparagine 103 to serine 122 are compositionally biased toward low complexity. Positions tyrosine 129–glutamate 162 constitute a WW domain. 2 positions are modified to phosphoserine: serine 131 and serine 142. Composition is skewed to basic and acidic residues over residues glutamate 158–asparagine 174 and proline 182–valine 191. Disordered stretches follow at residues glutamate 158–threonine 352 and threonine 428–valine 541. The segment covering aspartate 211–serine 225 has biased composition (polar residues). Serine 225 carries the phosphoserine modification. The segment covering arginine 226–threonine 239 has biased composition (basic and acidic residues). The span at proline 252–proline 267 shows a compositional bias: low complexity. Polar residues predominate over residues glycine 284–alanine 300. Threonine 293 is modified (phosphothreonine). Lysine 302 is subject to N6-acetyllysine. Polar residues predominate over residues serine 316–asparagine 331. Residues proline 332–serine 351 are compositionally biased toward low complexity. Polar residues predominate over residues threonine 428–valine 463. Serine 446 carries the phosphoserine modification. At threonine 471 the chain carries Phosphothreonine. Polar residues predominate over residues valine 490 to lysine 503. Residues serine 511, serine 523, and serine 525 each carry the phosphoserine modification. Low complexity predominate over residues serine 511–proline 524. The segment covering proline 528–valine 541 has biased composition (polar residues). Residues glutamine 617–serine 643 are a coiled coil.

In terms of assembly, interacts (via coiled coil domain) with RNF20, RNF40 and UBE2A. Interacts (via WW domain) with RNA polymerase II. Interacts with MTOR and other components of the MTOR pathway including RPTOR, RUVBL1, RUVBL2, TTI1 and TTI2. Post-translationally, phosphorylated on tyrosine residues.

The protein resides in the nucleus speckle. Its subcellular location is the nucleus. Its function is as follows. Acts as a linker between gene transcription and histone H2B monoubiquitination at 'Lys-120' (H2BK120ub1). Interacts with the RNA polymerase II transcriptional machinery via its WW domain and with RNF20-RNF40 via its coiled coil region, thereby linking and regulating H2BK120ub1 and gene transcription. Regulates the cell-cycle checkpoint activation in response to DNA damage. Positive regulator of amino acid starvation-induced autophagy. Also acts as a negative regulator of basal autophagy. Positively regulates MTOR activity by promoting, in an energy-dependent manner, the assembly of the TTT complex composed of TELO2, TTI1 and TTI2 and the RUVBL complex composed of RUVBL1 and RUVBL2 into the TTT-RUVBL complex. This leads to the dimerization of the mTORC1 complex and its subsequent activation. May negatively regulate the ubiquitin proteasome pathway. In Mus musculus (Mouse), this protein is WW domain-containing adapter protein with coiled-coil (Wac).